Consider the following 624-residue polypeptide: Diatom spindle kinesin-1 (624 aa).

Residues 1–59 (MNAANRRKSTSTVGITGRKDATRMKIEQMEKERKERRKTMMQRKEARKQEHMKNIEAGN) form a disordered region. Residues 1–85 (MNAANRRKST…QENKIGDKSP (85 aa)) form a globular region. Composition is skewed to basic and acidic residues over residues 17–33 (GRKDATRMKIEQMEKER) and 42–54 (QRKEARKQEHMKN). A Kinesin motor domain is found at 95 to 411 (NICIAVRKRP…LRYADRIKEQ (317 aa)). 186-193 (GQTGSGKT) provides a ligand contact to ATP. Positions 426 to 624 (SNREIMPSKE…LARQVQLTQY (199 aa)) form a coiled coil. The span at 478–511 (VDEEEADDEEGDYEEESEDLDYEDSEGQDYEEAV) shows a compositional bias: acidic residues. Positions 478–528 (VDEEEADDEEGDYEEESEDLDYEDSEGQDYEEAVESQYDHSQEAQEGEEEL) are disordered.

This sequence belongs to the TRAFAC class myosin-kinesin ATPase superfamily. Kinesin family. MCAK/KIF2 subfamily.

The protein resides in the cytoplasm. It localises to the cytoskeleton. Involved in anaphase spindle elongation. The chain is Diatom spindle kinesin-1 (DSK1) from Cylindrotheca fusiformis (Marine diatom).